The chain runs to 677 residues: Methionine--tRNA ligase (677 aa).

The 'HIGH' region motif lies at Pro-15 to His-25. The Zn(2+) site is built by Cys-146, Cys-149, Cys-159, and Cys-162. The 'KMSKS' region motif lies at Lys-333 to Ser-337. Lys-336 lines the ATP pocket. The tRNA-binding domain maps to Asp-575 to Lys-677.

The protein belongs to the class-I aminoacyl-tRNA synthetase family. MetG type 1 subfamily. Homodimer. Requires Zn(2+) as cofactor.

The protein localises to the cytoplasm. The enzyme catalyses tRNA(Met) + L-methionine + ATP = L-methionyl-tRNA(Met) + AMP + diphosphate. Its function is as follows. Is required not only for elongation of protein synthesis but also for the initiation of all mRNA translation through initiator tRNA(fMet) aminoacylation. The polypeptide is Methionine--tRNA ligase (Escherichia coli (strain ATCC 8739 / DSM 1576 / NBRC 3972 / NCIMB 8545 / WDCM 00012 / Crooks)).